Consider the following 303-residue polypeptide: D-alanine--D-alanine ligase (303 aa).

The 197-residue stretch at 104–300 (KLMWQAVGLP…FEKLVERVLE (197 aa)) folds into the ATP-grasp domain. 132–187 (IAKLGLPVFVKPSSEGSSVGVTKVKTVEQLLPAVEEALKFDSIVLVEAFLAGKEYS) is an ATP binding site. Residues Asp-254, Glu-267, and Asn-269 each contribute to the Mg(2+) site.

It belongs to the D-alanine--D-alanine ligase family. It depends on Mg(2+) as a cofactor. Requires Mn(2+) as cofactor.

It is found in the cytoplasm. The enzyme catalyses 2 D-alanine + ATP = D-alanyl-D-alanine + ADP + phosphate + H(+). It participates in cell wall biogenesis; peptidoglycan biosynthesis. Cell wall formation. The protein is D-alanine--D-alanine ligase of Actinobacillus pleuropneumoniae serotype 5b (strain L20).